The chain runs to 544 residues: Fructose dehydrogenase large subunit (544 aa).

Glycine 14–glycine 30 contacts FAD. Histidine 478 functions as the Proton acceptor in the catalytic mechanism.

Belongs to the GMC oxidoreductase family. As to quaternary structure, heterotrimer composed of FdhL, FdhS and FdhC. It depends on FAD as a cofactor.

It is found in the cell membrane. It carries out the reaction keto-D-fructose + a ubiquinone = 5-dehydro-D-fructose + a ubiquinol. Its function is as follows. Catalytic subunit of fructose dehydrogenase, an enzyme that catalyzes the oxidation of D-fructose to produce 5-keto-D-fructose. This Gluconobacter japonicus protein is Fructose dehydrogenase large subunit (fdhL).